The chain runs to 226 residues: CD9 antigen (226 aa).

The Cytoplasmic portion of the chain corresponds to 1-12 (MPVKGGTKCIKY). A lipid anchor (S-palmitoyl cysteine) is attached at Cys9. A helical membrane pass occupies residues 13-33 (LLFGFNFIFWLAGIAVLAVGL). Residues 34–53 (WLRFDSQTKSIFEQDSQPSS) lie on the Extracellular side of the membrane. A helical transmembrane segment spans residues 54–74 (FYTGVYILIGAGALMMLVGFL). Residues 75–85 (GCCGAVQESQC) are Cytoplasmic-facing. 3 S-palmitoyl cysteine lipidation sites follow: Cys76, Cys77, and Cys85. Residues 86 to 109 (MLGLFFGFLLVIFAIEIAAAIWGY) form a helical membrane-spanning segment. Residues 110 to 193 (SHKDEVIQEV…KEVFHNKFHI (84 aa)) are Extracellular-facing. Disulfide bonds link Cys150–Cys179 and Cys151–Cys165. The chain crosses the membrane as a helical span at residues 194 to 219 (IGAVGIGIAVVMIFGMIFSMILCCAI). Residues Cys216 and Cys217 are each lipidated (S-palmitoyl cysteine). Residues 220 to 226 (RRSREMV) lie on the Cytoplasmic side of the membrane.

The protein belongs to the tetraspanin (TM4SF) family. In terms of assembly, forms both disulfide-linked homodimers and higher homooligomers as well as heterooligomers with other members of the tetraspanin family. Interacts (via the second extracellular domain) with integrin ITGAV:ITGB3. Interacts with integrin ITGA6:ITGB1; interaction takes place in oocytes and is involved in sperm-egg fusion. Part of integrin-tetraspanin complexes composed of CD81, beta-1 and beta-2 integrins in the membrane of monocyte/macrophages. Interacts with CD63; identified in a complex with CD63 and ITGB3. Associates with CR2/CD21 and with PTGFRN/CD9P1. Part of a complex composed of CD9, CD81, PTGFRN and IGSF8. Interacts directly with IGSF8. Interacts with PDPN; this interaction is homophilic and attenuates platelet aggregation and pulmonary metastasis induced by PDPN. Interacts (on T cell side) with CD81 at immunological synapses between antigen-presenting cells and T cells. In terms of processing, palmitoylated at a low, basal level in unstimulated platelets. The level of palmitoylation increases when platelets are activated by thrombin (in vitro). The protein exists in three forms with molecular masses between 22 and 27 kDa, and is known to carry covalently linked fatty acids. Palmitoylation by ZDHHC2 regulates CD9 expression, association with other tetraspanin family proteins and function in cell adhesion.

It is found in the cell membrane. The protein resides in the membrane. The protein localises to the secreted. Its subcellular location is the extracellular exosome. Its function is as follows. Integral membrane protein associated with integrins, which regulates different processes, such as sperm-egg fusion, platelet activation and aggregation, and cell adhesion. Present at the cell surface of oocytes and plays a key role in sperm-egg fusion, possibly by organizing multiprotein complexes and the morphology of the membrane required for the fusion. In myoblasts, associates with CD81 and PTGFRN and inhibits myotube fusion during muscle regeneration. In macrophages, associates with CD81 and beta-1 and beta-2 integrins, and prevents macrophage fusion into multinucleated giant cells specialized in ingesting complement-opsonized large particles. Also prevents the fusion between mononuclear cell progenitors into osteoclasts in charge of bone resorption. Acts as a receptor for PSG17. Involved in platelet activation and aggregation. Regulates paranodal junction formation. Involved in cell adhesion, cell motility and tumor metastasis. The sequence is that of CD9 antigen from Felis catus (Cat).